Here is a 123-residue protein sequence, read N- to C-terminus: NADH-quinone oxidoreductase subunit A (123 aa).

The next 3 membrane-spanning stretches (helical) occupy residues 11–31 (FPVLMFLLVGTGLGVALVSIG), 67–87 (LVAILFIIFDLETAFLFPWGV), and 92–112 (IGWPGFISMMIFLLEFLLGFA).

This sequence belongs to the complex I subunit 3 family. NDH-1 is composed of 14 different subunits. Subunits NuoA, H, J, K, L, M, N constitute the membrane sector of the complex.

The protein localises to the cell inner membrane. It catalyses the reaction a quinone + NADH + 5 H(+)(in) = a quinol + NAD(+) + 4 H(+)(out). Its function is as follows. NDH-1 shuttles electrons from NADH, via FMN and iron-sulfur (Fe-S) centers, to quinones in the respiratory chain. The immediate electron acceptor for the enzyme in this species is believed to be ubiquinone. Couples the redox reaction to proton translocation (for every two electrons transferred, four hydrogen ions are translocated across the cytoplasmic membrane), and thus conserves the redox energy in a proton gradient. The chain is NADH-quinone oxidoreductase subunit A from Paraburkholderia phymatum (strain DSM 17167 / CIP 108236 / LMG 21445 / STM815) (Burkholderia phymatum).